The chain runs to 1106 residues: Carbamoyl phosphate synthase large chain (1106 aa).

A carboxyphosphate synthetic domain region spans residues 1-402; it reads MPKREDLKSV…ALQKALRSLE (402 aa). Arginine 129, arginine 169, glycine 175, glycine 176, glutamate 208, isoleucine 210, glutamate 215, glycine 241, valine 242, histidine 243, glutamine 285, and glutamate 299 together coordinate ATP. Positions 133 to 328 constitute an ATP-grasp 1 domain; the sequence is KGVVERCGAE…IAKIATKLSL (196 aa). Positions 285, 299, and 301 each coordinate Mg(2+). Mn(2+) is bound by residues glutamine 285, glutamate 299, and asparagine 301. An oligomerization domain region spans residues 403-546; it reads QKGSQLDFGS…YHYSSYDQED (144 aa). Positions 547 to 956 are carbamoyl phosphate synthetic domain; sequence EIALHEKPSV…AFAKSQAAAN (410 aa). The region spanning 677-868 is the ATP-grasp 2 domain; that stretch reads ARVLDIAGLI…LAKAAALIGT (192 aa). Arginine 713, arginine 752, leucine 754, glutamate 759, glycine 784, isoleucine 785, histidine 786, serine 787, glutamine 827, and glutamate 839 together coordinate ATP. Residues glutamine 827, glutamate 839, and asparagine 841 each contribute to the Mg(2+) site. Residues glutamine 827, glutamate 839, and asparagine 841 each coordinate Mn(2+). Residues 957–1106 form the MGS-like domain; sequence NALPTEGKVF…EALLEAAANV (150 aa). Positions 957–1106 are allosteric domain; the sequence is NALPTEGKVF…EALLEAAANV (150 aa).

The protein belongs to the CarB family. As to quaternary structure, composed of two chains; the small (or glutamine) chain promotes the hydrolysis of glutamine to ammonia, which is used by the large (or ammonia) chain to synthesize carbamoyl phosphate. Tetramer of heterodimers (alpha,beta)4. It depends on Mg(2+) as a cofactor. The cofactor is Mn(2+).

The enzyme catalyses hydrogencarbonate + L-glutamine + 2 ATP + H2O = carbamoyl phosphate + L-glutamate + 2 ADP + phosphate + 2 H(+). It catalyses the reaction hydrogencarbonate + NH4(+) + 2 ATP = carbamoyl phosphate + 2 ADP + phosphate + 2 H(+). It functions in the pathway amino-acid biosynthesis; L-arginine biosynthesis; carbamoyl phosphate from bicarbonate: step 1/1. It participates in pyrimidine metabolism; UMP biosynthesis via de novo pathway; (S)-dihydroorotate from bicarbonate: step 1/3. Functionally, large subunit of the glutamine-dependent carbamoyl phosphate synthetase (CPSase). CPSase catalyzes the formation of carbamoyl phosphate from the ammonia moiety of glutamine, carbonate, and phosphate donated by ATP, constituting the first step of 2 biosynthetic pathways, one leading to arginine and/or urea and the other to pyrimidine nucleotides. The large subunit (synthetase) binds the substrates ammonia (free or transferred from glutamine from the small subunit), hydrogencarbonate and ATP and carries out an ATP-coupled ligase reaction, activating hydrogencarbonate by forming carboxy phosphate which reacts with ammonia to form carbamoyl phosphate. The polypeptide is Carbamoyl phosphate synthase large chain (Renibacterium salmoninarum (strain ATCC 33209 / DSM 20767 / JCM 11484 / NBRC 15589 / NCIMB 2235)).